The sequence spans 115 residues: Replication initiation control protein YabA (115 aa).

4 residues coordinate Zn(2+): His90, Cys92, Cys106, and Cys109.

This sequence belongs to the YabA family. In terms of assembly, homotetramer. Interacts with both DnaA and DnaN, acting as a bridge between these two proteins. Zn(2+) is required as a cofactor.

Its subcellular location is the cytoplasm. It is found in the nucleoid. In terms of biological role, involved in control of chromosome replication initiation. Inhibits the cooperative binding of DnaA to the oriC region, thus negatively regulating initiation of chromosome replication. Inhibits the ability of DnaA-ATP to form a helix on DNA; does not disassemble preformed DnaA-DNA helices. Decreases the residence time of DnaA on the chromosome at its binding sites (oriC, replication forks and promoter-binding sites). Tethers DnaA to the replication machinery via the DNA polymerase beta sliding clamp subunit (dnaN). Associates with oriC and other DnaA targets on the chromosome in a DnaA-dependent manner. The chain is Replication initiation control protein YabA from Staphylococcus epidermidis (strain ATCC 35984 / DSM 28319 / BCRC 17069 / CCUG 31568 / BM 3577 / RP62A).